A 126-amino-acid chain; its full sequence is Holo-[acyl-carrier-protein] synthase (126 aa).

2 residues coordinate Mg(2+): Asp9 and Glu58.

It belongs to the P-Pant transferase superfamily. AcpS family. Mg(2+) serves as cofactor.

The protein localises to the cytoplasm. The enzyme catalyses apo-[ACP] + CoA = holo-[ACP] + adenosine 3',5'-bisphosphate + H(+). In terms of biological role, transfers the 4'-phosphopantetheine moiety from coenzyme A to a Ser of acyl-carrier-protein. The protein is Holo-[acyl-carrier-protein] synthase of Hamiltonella defensa subsp. Acyrthosiphon pisum (strain 5AT).